A 416-amino-acid chain; its full sequence is Cell division control protein 3 (416 aa).

The 276-residue stretch at 32 to 307 (RGFSLNIMAI…ENYRTEKLKR (276 aa)) folds into the Septin-type G domain. A G1 motif region spans residues 42–49 (GESGLGKA). Residues 42–49 (GESGLGKA), S79, G105, 184–192 (KSDTLTDEE), G240, and R256 each bind GTP. Residues 102 to 105 (TAPG) form a G3 motif region. Residues 183 to 186 (AKSD) form a G4 motif region. Residues 323–399 (AAKQEEERAL…QLEKQKLLPQ (77 aa)) are a coiled coil. Residues 392–416 (EKQKLLPQDPPAQPAPQKSRKGFLR) are disordered.

Belongs to the TRAFAC class TrmE-Era-EngA-EngB-Septin-like GTPase superfamily. Septin GTPase family.

Its subcellular location is the bud neck. Plays a role in the cell cycle. Involved in the formation of the ring of filaments in the neck region at the mother-bud junction during mitosis. In Candida albicans (Yeast), this protein is Cell division control protein 3 (CDC3).